The primary structure comprises 390 residues: GDSL esterase/lipase At1g28640 (390 aa).

Residues Met-1–Ser-26 form the signal peptide. Ser-42 (nucleophile) is an active-site residue. Asn-105, Asn-138, and Asn-321 each carry an N-linked (GlcNAc...) asparagine glycan. Catalysis depends on residues Asp-346 and His-349. Residue Asn-364 is glycosylated (N-linked (GlcNAc...) asparagine).

This sequence belongs to the 'GDSL' lipolytic enzyme family.

It is found in the secreted. The sequence is that of GDSL esterase/lipase At1g28640 from Arabidopsis thaliana (Mouse-ear cress).